The following is a 178-amino-acid chain: ATP synthase subunit b (178 aa).

Residues Phe-30–Pro-50 form a helical membrane-spanning segment.

It belongs to the ATPase B chain family. F-type ATPases have 2 components, F(1) - the catalytic core - and F(0) - the membrane proton channel. F(1) has five subunits: alpha(3), beta(3), gamma(1), delta(1), epsilon(1). F(0) has three main subunits: a(1), b(2) and c(10-14). The alpha and beta chains form an alternating ring which encloses part of the gamma chain. F(1) is attached to F(0) by a central stalk formed by the gamma and epsilon chains, while a peripheral stalk is formed by the delta and b chains.

It is found in the cell membrane. F(1)F(0) ATP synthase produces ATP from ADP in the presence of a proton or sodium gradient. F-type ATPases consist of two structural domains, F(1) containing the extramembraneous catalytic core and F(0) containing the membrane proton channel, linked together by a central stalk and a peripheral stalk. During catalysis, ATP synthesis in the catalytic domain of F(1) is coupled via a rotary mechanism of the central stalk subunits to proton translocation. Its function is as follows. Component of the F(0) channel, it forms part of the peripheral stalk, linking F(1) to F(0). This Mycobacterium avium (strain 104) protein is ATP synthase subunit b.